We begin with the raw amino-acid sequence, 557 residues long: Organic cation/carnitine transporter 2 (557 aa).

At 1–20 (MRDYDEVTAFLGEWGPFQRL) the chain is on the cytoplasmic side. Residues 21–41 (IFFLLSASIIPNGFNGMSIVF) traverse the membrane as a helical segment. The Extracellular segment spans residues 42-142 (LAGTPEHRCL…DLVCKDDWKA (101 aa)). 3 N-linked (GlcNAc...) asparagine glycosylation sites follow: Asn57, Asn64, and Asn91. A helical membrane pass occupies residues 143–163 (PLTTSLFFVGVLMGSFISGQL). The Cytoplasmic portion of the chain corresponds to 164-172 (SDRFGRKNV). A helical transmembrane segment spans residues 173-193 (LFLTMGMQTGFSFLQVFSVNF). Residues 194 to 197 (EMFT) are Extracellular-facing. A helical membrane pass occupies residues 198 to 218 (VLFVLVGMGQISNYVAAFVLG). 218-225 (GTEILSKS) contributes to the ATP binding site. Residues 219-232 (TEILSKSIRIIFAT) are Cytoplasmic-facing. A helical membrane pass occupies residues 233–253 (LGVCIFYAFGFMVLPLFAYFI). At 254–257 (RDWR) the chain is on the extracellular side. The chain crosses the membrane as a helical span at residues 258 to 278 (MLLLALTVPGVLCGALWWFIP). Residues 279-341 (ESPRWLISQG…YDLIRTRNIR (63 aa)) are Cytoplasmic-facing. The helical transmembrane segment at 342-362 (VITIMSIILWLTISVGYFGLS) threads the bilayer. The Extracellular portion of the chain corresponds to 363-373 (LDTPNLHGDIY). The chain crosses the membrane as a helical span at residues 374–394 (VNCFLLAAVEVPAYVLAWLLL). The Cytoplasmic segment spans residues 395–406 (QYLPRRYSISAA). The chain crosses the membrane as a helical span at residues 407–427 (LFLGGSVLLFMQLVPSELFYL). Over 428 to 430 (STA) the chain is Extracellular. The chain crosses the membrane as a helical span at residues 431–451 (LVMVGKFGITSAYSMVYVYTA). The Cytoplasmic portion of the chain corresponds to 452 to 462 (ELYPTVVRNMG). A helical transmembrane segment spans residues 463–483 (VGVSSTASRLGSILSPYFVYL). Over 484-488 (GAYDR) the chain is Extracellular. Tyr486 is subject to Phosphotyrosine. The chain crosses the membrane as a helical span at residues 489-509 (FLPYILMGSLTILTAILTLFF). The Cytoplasmic segment spans residues 510–557 (PESFGVPLPDTIDQMLRVKGIKQWQIQSQTRMQKDGEESPTVLKSTAF). Ser548 carries the phosphoserine modification. At Thr550 the chain carries Phosphothreonine.

It belongs to the major facilitator (TC 2.A.1) superfamily. Organic cation transporter (TC 2.A.1.19) family. As to quaternary structure, interacts with PDZK1. As to expression, widely expressed. Expressed in kidney, liver and testis. Expressed at the brush border of the small, large intestine and colon (at protein level).

The protein resides in the apical cell membrane. The protein localises to the basal cell membrane. Its subcellular location is the cell membrane. It carries out the reaction (R)-carnitine(out) + Na(+)(out) = (R)-carnitine(in) + Na(+)(in). The enzyme catalyses glycine betaine(out) + Na(+)(out) = glycine betaine(in) + Na(+)(in). The catalysed reaction is glycine betaine(out) + (R)-carnitine(in) = glycine betaine(in) + (R)-carnitine(out). It catalyses the reaction O-butanoyl-(R)-carnitine(out) + Na(+)(out) = O-butanoyl-(R)-carnitine(in) + Na(+)(in). It carries out the reaction O-acetyl-(R)-carnitine(out) + Na(+)(out) = O-acetyl-(R)-carnitine(in) + Na(+)(in). The enzyme catalyses O-propanoyl-(R)-carnitine(out) + Na(+)(out) = O-propanoyl-(R)-carnitine(in) + Na(+)(in). The catalysed reaction is (S)-carnitine(out) + Na(+)(out) = (S)-carnitine(in) + Na(+)(in). It catalyses the reaction an O-acyl-(R)-carnitine(out) + Na(+)(out) = an O-acyl-(R)-carnitine(in) + Na(+)(in). It carries out the reaction L-glutamyl-L-arginyl-glycyl-L-methionyl-L-threonine(out) + Na(+)(out) = L-glutamyl-L-arginyl-glycyl-L-methionyl-L-threonine(in) + Na(+)(in). The enzyme catalyses N,N-dimethylglycine(out) + Na(+)(out) = N,N-dimethylglycine(in) + Na(+)(in). With respect to regulation, inhibited by emetine, quinidine and verapamil. The IC(50) of emetine is 4.2 uM. Not inhibited by valproic acid. Transport of (R)-carnitine is stimulated by cholesterol in the plasma membrane. Sodium-ion dependent, high affinity carnitine transporter. Involved in the active cellular uptake of carnitine. Transports one sodium ion with one molecule of carnitine. Also transports organic cations such as tetraethylammonium (TEA) without the involvement of sodium. Also relative uptake activity ratio of carnitine to TEA is 11.3. May also contribute to regulate the transport of organic compounds in testis across the blood-testis-barrier. In Mus musculus (Mouse), this protein is Organic cation/carnitine transporter 2.